Consider the following 495-residue polypeptide: MAAEPQPSSLSYRTTGSTYLHPLSELLGIPLDQVNFVVCQLVALFAAFWFRIYLRPGTTSSDVRHAVATIFGIYFVIFCFGWYSVHLFVLVLMCYAIMVTASVSNIHRYSFFVAMGYLTICHISRIYIFHYGILTTDFSGPLMIVTQKITTLAFQVHDGLGRRAEDLSAEQHRLAIKVKPSFLEYLSYLLNFMSVIAGPCNNFKDYIAFIEGKHIHMKLLEVNWKRKGFHSLPEPSPTGAVIHKLGITLVSLLLFLTLTKTFPVTCLVDDWFVHKASFPARLCYLYVVMQASKPKYYFAWTLADAVNNAAGFGFSGVDKNGNFCWDLLSNLNIWKIETATSFKMYLENWNIQTATWLKCVCYQRVPWYPTVLTFILSALWHGVYPGYYFTFLTGILVTLAARAVRNNYRHYFLSSRALKAVYDAGTWAVTQLAVSYTVAPFVMLAVEPTISLYKSMYFYLHIISLLIILFLPMKPQAHTQRRPQTLNSINKRKTD.

The next 6 membrane-spanning stretches (helical) occupy residues 34 to 54 (VNFVVCQLVALFAAFWFRIYL), 70 to 90 (IFGIYFVIFCFGWYSVHLFVL), 126 to 146 (IYIFHYGILTTDFSGPLMIVT), 180 to 200 (PSFLEYLSYLLNFMSVIAGPC), 238 to 258 (TGAVIHKLGITLVSLLLFLTL), and 297 to 317 (YFAWTLADAVNNAAGFGFSGV). Catalysis depends on residues Asn-350 and His-381. 3 helical membrane-spanning segments follow: residues 371 to 391 (VLTFILSALWHGVYPGYYFTF), 426 to 446 (TWAVTQLAVSYTVAPFVMLAV), and 450 to 470 (ISLYKSMYFYLHIISLLIILF). Ser-488 is subject to Phosphoserine.

Belongs to the membrane-bound acyltransferase family. In terms of tissue distribution, expressed in neutrophils.

It is found in the endoplasmic reticulum membrane. The catalysed reaction is a 1-acyl-sn-glycero-3-phospho-L-serine + an acyl-CoA = a 1,2-diacyl-sn-glycero-3-phospho-L-serine + CoA. It catalyses the reaction a 1-acyl-sn-glycero-3-phosphocholine + an acyl-CoA = a 1,2-diacyl-sn-glycero-3-phosphocholine + CoA. It carries out the reaction a 1-acyl-sn-glycero-3-phosphoethanolamine + an acyl-CoA = a 1,2-diacyl-sn-glycero-3-phosphoethanolamine + CoA. The enzyme catalyses 1-(9Z-octadecenoyl)-sn-glycero-3-phospho-L-serine + (9Z)-octadecenoyl-CoA = 1,2-di-(9Z)-octadecenoyl-sn-glycero-3-phospho-L-serine + CoA. The catalysed reaction is 1-(9Z-octadecenoyl)-sn-glycero-3-phospho-L-serine + octadecanoyl-CoA = 1-(9Z-octadecenoyl)-2-octadecanoyl-sn-glycero-3-phospho-L-serine + CoA. It catalyses the reaction 1-(9Z-octadecenoyl)-sn-glycero-3-phospho-L-serine + (9Z)-hexadecenoyl-CoA = 1-(9Z-octadecenoyl)-2-(9Z-hexadecenoyl)-sn-glycero-3-phospho-L-serine + CoA. It carries out the reaction 1-(9Z-octadecenoyl)-sn-glycero-3-phospho-L-serine + (9Z,12Z)-octadecadienoyl-CoA = 1-(9Z-octadecenoyl)-2-(9Z,12Z-octadienoyl)-sn-glycero-3-phospho-L-serine + CoA. The enzyme catalyses 1-hexadecanoyl-sn-glycero-3-phosphocholine + (9Z)-octadecenoyl-CoA = 1-hexadecanoyl-2-(9Z-octadecenoyl)-sn-glycero-3-phosphocholine + CoA. The catalysed reaction is a 1-O-(1Z-alkenyl)-sn-glycero-3-phosphoethanolamine + (9Z)-octadecenoyl-CoA = 1-O-(1Z)-alkenyl-2-(9Z)-octadecenoyl-sn-glycero-3-phosphoethanolamine + CoA. It catalyses the reaction 1-octadecanoyl-sn-glycero-3-phosphoethanolamine + (9Z)-octadecenoyl-CoA = 1-octadecanoyl-2-(9Z-octadecenoyl)-sn-glycero-3-phosphoethanolamine + CoA. It carries out the reaction 1-(9Z-octadecenoyl)-sn-glycero-3-phosphoethanolamine + (9Z)-octadecenoyl-CoA = 1,2-di-(9Z-octadecenoyl)-sn-glycero-3-phosphoethanolamine + CoA. The enzyme catalyses 1-hexadecanoyl-sn-glycero-3-phosphoethanolamine + (9Z)-octadecenoyl-CoA = 1-hexadecanoyl-2-(9Z-octadecenoyl)-sn-glycero-3-phosphoethanolamine + CoA. The catalysed reaction is 1-(10Z-heptadecenoyl)-sn-glycero-3-phosphoethanolamine + hexadecanoyl-CoA = 1-(10Z-heptadecenoyl)-2-hexadecanoyl-sn-glycero-3-phosphoethanolamine + CoA. It catalyses the reaction 1-(10Z-heptadecenoyl)-sn-glycero-3-phosphoethanolamine + (9Z)-octadecenoyl-CoA = 1-(10Z-heptadecenoyl)-2-(9Z-octadecenoyl)-sn-glycero-3-phosphoethanolamine + CoA. It participates in lipid metabolism; phospholipid metabolism. Partially inhibited by thimerosal. Acyltransferase which catalyzes the transfer of an acyl group from an acyl-CoA towards a lysophospholipid producing a phospholipid and participates in the reacylation step of the phospholipid remodeling pathway also known as the Lands cycle. Acts on lysophosphatidylserine (1-acyl-2-hydroxy-sn-glycero-3-phospho-L-serine or LPS) and lysophosphatidylethanolamine (1-acyl-sn-glycero-3-phosphoethanolamine or LPE), and to a lesser extend lysophosphatidylcholine. Prefers oleoyl-CoA as the acyl donor and 1-oleoyl-LPE as acceptor. May play a role in neurite outgrowth during neuronal differentiation. This Homo sapiens (Human) protein is Membrane-bound glycerophospholipid O-acyltransferase 1.